A 362-amino-acid polypeptide reads, in one-letter code: Prostaglandin F2-alpha receptor (362 aa).

Topologically, residues 1 to 31 (MSTNSSIQPVSPESELLSNTTCQLEEDLSIS) are extracellular. Asn4 and Asn19 each carry an N-linked (GlcNAc...) asparagine glycan. A helical membrane pass occupies residues 32 to 54 (FSIIFMTVGILSNSLAIAILMKA). At 55 to 69 (YQRFRQKYKSSFLLL) the chain is on the cytoplasmic side. Residues 70–90 (ASALVITDFFGHLINGTIAVF) form a helical membrane-spanning segment. At 91–109 (VYASDKDWIYFDKSNILCS) the chain is on the extracellular side. The cysteines at positions 108 and 186 are disulfide-linked. The chain crosses the membrane as a helical span at residues 110–131 (IFGICMVFSGLCPLFLGSLMAI). Residues 132-152 (ERCIGVTKPIFHSTKITTKHV) lie on the Cytoplasmic side of the membrane. Residues 153–175 (KMMLSGVCFFAVFVALLPILGHR) traverse the membrane as a helical segment. Residues 176–198 (DYKIQASRTWCFYKTDEIKDWED) lie on the Extracellular side of the membrane. Residues 199-224 (RFYLLLFAFLGLLALGISFVCNAITG) form a helical membrane-spanning segment. Over 225 to 250 (ISLLKVKFRSQQHRQGRSHHFEMVIQ) the chain is Cytoplasmic. Residues 251-267 (LLGIMCVSCICWSPFLV) traverse the membrane as a helical segment. Topologically, residues 268–285 (TMASIGMNIQDFKDSCER) are extracellular. A helical membrane pass occupies residues 286-307 (TLFTLRMATWNQILDPWVYILL). Residues 308-362 (RKAVLRNLYVCTRRCCGVHVISLHVWELSSIKDSLKVAAISDLPVTEKVTQQTST) lie on the Cytoplasmic side of the membrane.

It belongs to the G-protein coupled receptor 1 family.

The protein localises to the cell membrane. Its function is as follows. Receptor for prostaglandin F2-alpha (PGF2-alpha). The activity of this receptor is mediated by G proteins which activate a phosphatidylinositol-calcium second messenger system. Initiates luteolysis in the corpus luteum. This Bos taurus (Bovine) protein is Prostaglandin F2-alpha receptor (PTGFR).